The sequence spans 202 residues: Matrix protein (202 aa).

The PPXY motif motif lies at 35–38; that stretch reads PPEY. Residues 115–151 are essential for glycoprotein binding; it reads KIRRTLVFQWAESSGPLDGEELEYSQEITWDDDSEFV.

The protein belongs to the lyssavirus matrix protein family. As to quaternary structure, homomultimer. Interacts with nucleoprotein and with the cytoplasmic domain of glycoprotein.

It localises to the virion membrane. The protein localises to the host endomembrane system. Plays a major role in assembly and budding of virion. Completely covers the ribonucleoprotein coil and keep it in condensed bullet-shaped form. Inhibits viral transcription and stimulates replication. Plays a major role in early induction of TRAIL-mediated apoptosis in infected neurons. This chain is Matrix protein (M), found in Irkut virus (IRKV).